Reading from the N-terminus, the 495-residue chain is MRVGAEYQARIPEFDPGATKYTDKDNGGMLVWSPYHSIPDAKLDEYIAIAKEKHGYNVEQALGMLFWHKHNIEKSLADLPNFTPFPDEWTVEDKVLFEQAFSFHGKSFHRIQQMLPDKTIASLVKYYYSWKKTRSRTSLMDRQARKLANRHNQGDSDDDVEETHPMDGNDSDYDPKKEAKKEGNTEQPVQTSKIGLGRREYQSLQHRHHSQRSKCRPPKGMYLTQEDVVAVSCSPNAANTILRQLDMELISLKRQVQNAKQVNSALKQKMEGGIEEFKPPESNQKINARWTTEEQLLAVQGVRKYGKDFQAIADVIGNKTVGQVKNFFVNYRRRFNLEEVLQEWEAEQGTQASNGDASTLGEETKSASNVPSGKSTDEEEEAQTPQAPRTLGPSPPAPSSTPTPTAPIATLNQPPPLLRPTLPAAPALHRQPPPLQQQARFIQPRPTLNQPPPPLIRPANSMPPRLNPRPVLSTVGGQQPPSLIGIQTDSQSSLH.

In terms of domain architecture, ELM2 spans 1–83 (MRVGAEYQAR…KSLADLPNFT (83 aa)). A Glycyl lysine isopeptide (Lys-Gly) (interchain with G-Cter in SUMO2) cross-link involves residue lysine 20. The SANT 1 domain occupies 84–135 (PFPDEWTVEDKVLFEQAFSFHGKSFHRIQQMLPDKTIASLVKYYYSWKKTRS). The tract at residues 147–219 (LANRHNQGDS…SQRSKCRPPK (73 aa)) is disordered. Phosphoserine occurs at positions 156 and 171. Residues 162–184 (ETHPMDGNDSDYDPKKEAKKEGN) are compositionally biased toward basic and acidic residues. Residue lysine 193 forms a Glycyl lysine isopeptide (Lys-Gly) (interchain with G-Cter in SUMO2) linkage. The segment covering 205–217 (QHRHHSQRSKCRP) has biased composition (basic residues). Residues 237-273 (AANTILRQLDMELISLKRQVQNAKQVNSALKQKMEGG) are a coiled coil. A Glycyl lysine isopeptide (Lys-Gly) (interchain with G-Cter in SUMO2) cross-link involves residue lysine 285. The region spanning 285–336 (KINARWTTEEQLLAVQGVRKYGKDFQAIADVIGNKTVGQVKNFFVNYRRRFN) is the SANT 2 domain. Positions 346–495 (AEQGTQASNG…IQTDSQSSLH (150 aa)) are disordered. Polar residues predominate over residues 348–357 (QGTQASNGDA). Threonine 376 is modified (phosphothreonine). Pro residues predominate over residues 393-405 (PSPPAPSSTPTPT). Over residues 419-428 (RPTLPAAPAL) the composition is skewed to low complexity. Arginine 445 and arginine 457 each carry asymmetric dimethylarginine. Positions 475 to 495 (VGGQQPPSLIGIQTDSQSSLH) are enriched in polar residues.

This sequence belongs to the CoREST family.

The protein localises to the nucleus. Its function is as follows. May act as a component of a corepressor complex that represses transcription. In Homo sapiens (Human), this protein is REST corepressor 3 (RCOR3).